Here is a 689-residue protein sequence, read N- to C-terminus: Glycine--tRNA ligase beta subunit (689 aa).

Belongs to the class-II aminoacyl-tRNA synthetase family. Tetramer of two alpha and two beta subunits.

It localises to the cytoplasm. The catalysed reaction is tRNA(Gly) + glycine + ATP = glycyl-tRNA(Gly) + AMP + diphosphate. The protein is Glycine--tRNA ligase beta subunit of Acinetobacter baylyi (strain ATCC 33305 / BD413 / ADP1).